The following is a 441-amino-acid chain: Inositol hexakisphosphate kinase 1 (441 aa).

The segment at 100-175 is disordered; sequence ETVEQDDTTE…MLDGNSGLSS (76 aa). A compositionally biased stretch (basic residues) spans 113-123; sequence PRRKHSRRSLH. The span at 137 to 149 shows a compositional bias: low complexity; sequence SLSLETSESSQEA. Residues 150–160 show a composition bias toward basic and acidic residues; it reads KSPKVELHSHS. Ser151 is modified (phosphoserine). Residue 220 to 228 participates in substrate binding; sequence PCVLDLKMG. The disordered stretch occupies residues 370-392; it reads SSCGPSTSPSNTSPEAGPSSQPK. The span at 372–391 shows a compositional bias: polar residues; it reads CGPSTSPSNTSPEAGPSSQP.

This sequence belongs to the inositol phosphokinase (IPK) family.

Its subcellular location is the cytoplasm. It localises to the nucleus. It carries out the reaction 1D-myo-inositol hexakisphosphate + ATP = 5-diphospho-1D-myo-inositol 1,2,3,4,6-pentakisphosphate + ADP. It catalyses the reaction 1-diphospho-1D-myo-inositol 2,3,4,5,6-pentakisphosphate + ATP + H(+) = 1,5-bis(diphospho)-1D-myo-inositol 2,3,4,6-tetrakisphosphate + ADP. Its function is as follows. Converts inositol hexakisphosphate (InsP6) to diphosphoinositol pentakisphosphate (InsP7/PP-InsP5). Converts 1,3,4,5,6-pentakisphosphate (InsP5) to PP-InsP4. The sequence is that of Inositol hexakisphosphate kinase 1 (IP6K1) from Homo sapiens (Human).